The sequence spans 194 residues: dCTP deaminase (194 aa).

Residues 110 to 115 (RSSLAR), D128, 136 to 138 (VLE), Y171, K178, and Q182 each bind dCTP. The active-site Proton donor/acceptor is the E138. The disordered stretch occupies residues 175–194 (KDAKYKNQQSAVSSRINQDD). Residues 180–194 (KNQQSAVSSRINQDD) show a composition bias toward polar residues.

This sequence belongs to the dCTP deaminase family. As to quaternary structure, homotrimer.

The enzyme catalyses dCTP + H2O + H(+) = dUTP + NH4(+). It participates in pyrimidine metabolism; dUMP biosynthesis; dUMP from dCTP (dUTP route): step 1/2. Catalyzes the deamination of dCTP to dUTP. The sequence is that of dCTP deaminase from Actinobacillus pleuropneumoniae serotype 5b (strain L20).